Here is a 304-residue protein sequence, read N- to C-terminus: N-acetyl-D-glucosamine kinase (304 aa).

ATP-binding positions include 4–11 and 133–140; these read GFDMGGTK and GVGGGLIV. Zn(2+) is bound by residues histidine 157, cysteine 177, cysteine 179, and cysteine 184.

It belongs to the ROK (NagC/XylR) family. NagK subfamily.

The catalysed reaction is N-acetyl-D-glucosamine + ATP = N-acetyl-D-glucosamine 6-phosphate + ADP + H(+). It participates in cell wall biogenesis; peptidoglycan recycling. Catalyzes the phosphorylation of N-acetyl-D-glucosamine (GlcNAc) derived from cell-wall degradation, yielding GlcNAc-6-P. The sequence is that of N-acetyl-D-glucosamine kinase from Yersinia pseudotuberculosis serotype O:3 (strain YPIII).